The sequence spans 708 residues: Ubiquitin thioesterase Zranb1 (708 aa).

Residues 3–33 (EHGIKWACEYCTYENWPSAIKCTMCRAQRPS) form a RanBP2-type 1 zinc finger. Residues Cys10, Cys13, Cys24, and Cys27 each coordinate Zn(2+). The tract at residues 38 to 73 (TEDPFKSGSSDVGRDWDPSSTEGGSSPLICPDSSAR) is disordered. 2 consecutive RanBP2-type zinc fingers follow at residues 84–113 (NANKWSCHMCTYLNWPRAIRCTQCLSQRRT) and 149–178 (RTQHWTCSVCTYENWAKAKKCVVCDHPRPN). Positions 90, 93, 104, 107, 155, 158, 169, and 172 each coordinate Zn(2+). The disordered stretch occupies residues 202–224 (RWRGGCSSGNSQRRSPPTTKRDS). A compositionally biased stretch (polar residues) spans 209–219 (SGNSQRRSPPT). 2 ANK repeats span residues 260 to 290 (KKTDWLFLNACVGVVEGDLAAIEAYKSSGGD) and 313 to 340 (YTLVHLAIRFQRQDMLAILLTEVSQQAA). The region spanning 432 to 592 (LYALWNRTAG…RGHFSALVAM (161 aa)) is the OTU domain. Cys443 (nucleophile) is an active-site residue. Residue His585 is the Proton acceptor of the active site.

This sequence belongs to the peptidase C64 family. Interacts with TRAF6. Interacts with APC.

The protein localises to the cytoplasm. It localises to the nucleus. It carries out the reaction Thiol-dependent hydrolysis of ester, thioester, amide, peptide and isopeptide bonds formed by the C-terminal Gly of ubiquitin (a 76-residue protein attached to proteins as an intracellular targeting signal).. Functionally, ubiquitin thioesterase, which specifically hydrolyzes 'Lys-29'-linked and 'Lys-33'-linked diubiquitin. Also cleaves 'Lys-63'-linked chains, but with 40-fold less efficiency compared to 'Lys-29'-linked ones. Positive regulator of the Wnt signaling pathway that deubiquitinates APC protein, a negative regulator of Wnt-mediated transcription. Acts as a regulator of autophagy by mediating deubiquitination of PIK3C3/VPS34, thereby promoting autophagosome maturation. Plays a role in the regulation of cell morphology and cytoskeletal organization. Required in the stress fiber dynamics and cell migration. This chain is Ubiquitin thioesterase Zranb1, found in Mus musculus (Mouse).